The chain runs to 307 residues: Aspartate carbamoyltransferase catalytic subunit (307 aa).

Carbamoyl phosphate-binding residues include Arg-54 and Thr-55. Residue Lys-83 participates in L-aspartate binding. Carbamoyl phosphate is bound by residues Arg-104, His-132, and Gln-135. Residues Arg-165 and Arg-228 each coordinate L-aspartate. 2 residues coordinate carbamoyl phosphate: Leu-267 and Pro-268.

The protein belongs to the aspartate/ornithine carbamoyltransferase superfamily. ATCase family. As to quaternary structure, heterododecamer (2C3:3R2) of six catalytic PyrB chains organized as two trimers (C3), and six regulatory PyrI chains organized as three dimers (R2).

The enzyme catalyses carbamoyl phosphate + L-aspartate = N-carbamoyl-L-aspartate + phosphate + H(+). It functions in the pathway pyrimidine metabolism; UMP biosynthesis via de novo pathway; (S)-dihydroorotate from bicarbonate: step 2/3. Catalyzes the condensation of carbamoyl phosphate and aspartate to form carbamoyl aspartate and inorganic phosphate, the committed step in the de novo pyrimidine nucleotide biosynthesis pathway. This chain is Aspartate carbamoyltransferase catalytic subunit, found in Clostridium perfringens (strain 13 / Type A).